We begin with the raw amino-acid sequence, 299 residues long: ATP phosphoribosyltransferase (299 aa).

It belongs to the ATP phosphoribosyltransferase family. Long subfamily. As to quaternary structure, equilibrium between an active dimeric form, an inactive hexameric form and higher aggregates. Interconversion between the various forms is largely reversible and is influenced by the natural substrates and inhibitors of the enzyme. Requires Mg(2+) as cofactor.

The protein resides in the cytoplasm. The catalysed reaction is 1-(5-phospho-beta-D-ribosyl)-ATP + diphosphate = 5-phospho-alpha-D-ribose 1-diphosphate + ATP. Its pathway is amino-acid biosynthesis; L-histidine biosynthesis; L-histidine from 5-phospho-alpha-D-ribose 1-diphosphate: step 1/9. Its activity is regulated as follows. Feedback inhibited by histidine. Functionally, catalyzes the condensation of ATP and 5-phosphoribose 1-diphosphate to form N'-(5'-phosphoribosyl)-ATP (PR-ATP). Has a crucial role in the pathway because the rate of histidine biosynthesis seems to be controlled primarily by regulation of HisG enzymatic activity. This is ATP phosphoribosyltransferase from Escherichia coli O7:K1 (strain IAI39 / ExPEC).